Reading from the N-terminus, the 309-residue chain is Mannitol-1-phosphatase (309 aa).

The active-site Tele-phosphohistidine intermediate is the His82. Glu166 acts as the Proton donor/acceptor in catalysis.

It belongs to the phosphoglycerate mutase family.

The catalysed reaction is D-mannitol 1-phosphate + H2O = D-mannitol + phosphate. With respect to regulation, by diethyl pyrocarbonate (DEPC). Key enzyme for mannitol biosynthesis. This chain is Mannitol-1-phosphatase, found in Eimeria tenella (Coccidian parasite).